Consider the following 453-residue polypeptide: MKLLLMLLFSGLMTGCRGNSSSASPPKLLLVSFDGFRADYLQNYEFPHLQNFIKEGVLVEQVKNVFITKTFPNHYSIVTGLYEESHGIVANSMYDVNTKKHFSDHNDKDPFWWNEAVPIWVTNQLQDNRSSAAAMWPGTDVPIHNSTPSYFMNYSPSVSFRERLGNVTTWLSSSNPPVTFATLYWEEPDASGHKYGPEDKENMRRVLEEIDEHIGELVHRLKVLGLWESLNVIITSDHGMTQCSKDRVINLDGCLDPSYYTLIDLTPVAAILPKINKTKVYSKLKVCDPHMNVYLKEDIPARFHYQHSDRIQPIILVADEGWTIVLNKSSLKLGDHGYDNSLPSMNPFLAAHGPAFHKGYKHSSINTVDIYPMMCHILGLKPHPNNGTFGHTKCLLVDQWCINLPEAIGIVIGALLVLTTLTCLIIIMQNRVSGPRPFSRLQLQEDDDDPLIG.

The N-terminal stretch at 1 to 18 is a signal peptide; the sequence is MKLLLMLLFSGLMTGCRG. Residues 19 to 407 lie on the Extracellular side of the membrane; the sequence is NSSSASPPKL…DQWCINLPEA (389 aa). Positions 34 and 70 each coordinate Zn(2+). Thr70 (AMP-threonine intermediate) is an active-site residue. Positions 91 and 154 each coordinate substrate. Asn166 is a glycosylation site (N-linked (GlcNAc...) asparagine). 4 residues coordinate Zn(2+): Asp189, His193, Asp237, and His238. Asp189 contacts substrate. A disulfide bond links Cys254 and Cys287. Asn276 carries an N-linked (GlcNAc...) asparagine glycan. His336 contacts Zn(2+). Residues Cys394 and Cys401 are joined by a disulfide bond. The chain crosses the membrane as a helical span at residues 408–428; that stretch reads IGIVIGALLVLTTLTCLIIIM. The Cytoplasmic segment spans residues 429 to 453; sequence QNRVSGPRPFSRLQLQEDDDDPLIG.

It belongs to the nucleotide pyrophosphatase/phosphodiesterase family. Zn(2+) is required as a cofactor.

The protein localises to the cell membrane. It catalyses the reaction P(1),P(3)-bis(5'-adenosyl) triphosphate + H2O = AMP + ADP + 2 H(+). Hydrolyzes extracellular Ap3A into AMP and ADP, and Ap4A into AMP and ATP. Ap3A and Ap4A are diadenosine polyphosphates thought to induce proliferation of vascular smooth muscle cells. Acts as a procoagulant, mediating platelet aggregation at the site of nascent thrombus via release of ADP from Ap3A and activation of ADP receptors. In Bos taurus (Bovine), this protein is Bis(5'-adenosyl)-triphosphatase ENPP4 (ENPP4).